A 315-amino-acid chain; its full sequence is Lipoyl synthase (315 aa).

[4Fe-4S] cluster-binding residues include Cys62, Cys67, Cys73, Cys88, Cys92, Cys95, and Ser302. The Radical SAM core domain maps to 74 to 291; the sequence is FGKGTATFMI…ETEALAMGFK (218 aa).

It belongs to the radical SAM superfamily. Lipoyl synthase family. Requires [4Fe-4S] cluster as cofactor.

It is found in the cytoplasm. The catalysed reaction is [[Fe-S] cluster scaffold protein carrying a second [4Fe-4S](2+) cluster] + N(6)-octanoyl-L-lysyl-[protein] + 2 oxidized [2Fe-2S]-[ferredoxin] + 2 S-adenosyl-L-methionine + 4 H(+) = [[Fe-S] cluster scaffold protein] + N(6)-[(R)-dihydrolipoyl]-L-lysyl-[protein] + 4 Fe(3+) + 2 hydrogen sulfide + 2 5'-deoxyadenosine + 2 L-methionine + 2 reduced [2Fe-2S]-[ferredoxin]. The protein operates within protein modification; protein lipoylation via endogenous pathway; protein N(6)-(lipoyl)lysine from octanoyl-[acyl-carrier-protein]: step 2/2. Its function is as follows. Catalyzes the radical-mediated insertion of two sulfur atoms into the C-6 and C-8 positions of the octanoyl moiety bound to the lipoyl domains of lipoate-dependent enzymes, thereby converting the octanoylated domains into lipoylated derivatives. The chain is Lipoyl synthase from Aromatoleum aromaticum (strain DSM 19018 / LMG 30748 / EbN1) (Azoarcus sp. (strain EbN1)).